Consider the following 94-residue polypeptide: Small ribosomal subunit protein uS19 (94 aa).

Belongs to the universal ribosomal protein uS19 family.

In terms of biological role, protein S19 forms a complex with S13 that binds strongly to the 16S ribosomal RNA. This Halothermothrix orenii (strain H 168 / OCM 544 / DSM 9562) protein is Small ribosomal subunit protein uS19.